The primary structure comprises 266 residues: Calpain small subunit 1 (266 aa).

Position 1 is an N-acetylmethionine (methionine 1). Phosphoserine is present on serine 6. Residues 94–128 (EEVRQFRRLFAQLAGDDMEVSATELMNILNKVVTR) enclose the EF-hand 1; atypical domain. The Ca(2+) site is built by alanine 107, aspartate 110, glutamate 112, glutamate 117, aspartate 135, aspartate 150, aspartate 152, threonine 154, lysine 156, and glutamate 161. 4 consecutive EF-hand domains span residues 137–170 (FGID…NNIK), 167–202 (NNIK…AGFH), 203–231 (LNEH…ISCL), and 232–266 (VRLD…TMYS). Lysine 177 is modified (N6-acetyllysine). The Ca(2+) site is built by aspartate 180, aspartate 182, serine 184, threonine 186, glutamate 191, and aspartate 223.

As to quaternary structure, homodimer or heterodimer of a large (catalytic) and a small (regulatory) subunit. In presence of calcium, the heterodimer dissociates.

It localises to the cytoplasm. Its subcellular location is the cell membrane. In terms of biological role, regulatory subunit of the calcium-regulated non-lysosomal thiol-protease which catalyzes limited proteolysis of substrates involved in cytoskeletal remodeling and signal transduction. Essential for embryonic development. This Sus scrofa (Pig) protein is Calpain small subunit 1 (CAPNS1).